The chain runs to 212 residues: Imidazole glycerol phosphate synthase subunit HisH (212 aa).

Residues 3-212 form the Glutamine amidotransferase type-1 domain; the sequence is TVAVIDYGMG…QNFAAWDGRW (210 aa). The active-site Nucleophile is the Cys81. Active-site residues include His190 and Glu192.

In terms of assembly, heterodimer of HisH and HisF.

The protein resides in the cytoplasm. It carries out the reaction 5-[(5-phospho-1-deoxy-D-ribulos-1-ylimino)methylamino]-1-(5-phospho-beta-D-ribosyl)imidazole-4-carboxamide + L-glutamine = D-erythro-1-(imidazol-4-yl)glycerol 3-phosphate + 5-amino-1-(5-phospho-beta-D-ribosyl)imidazole-4-carboxamide + L-glutamate + H(+). The catalysed reaction is L-glutamine + H2O = L-glutamate + NH4(+). It participates in amino-acid biosynthesis; L-histidine biosynthesis; L-histidine from 5-phospho-alpha-D-ribose 1-diphosphate: step 5/9. In terms of biological role, IGPS catalyzes the conversion of PRFAR and glutamine to IGP, AICAR and glutamate. The HisH subunit catalyzes the hydrolysis of glutamine to glutamate and ammonia as part of the synthesis of IGP and AICAR. The resulting ammonia molecule is channeled to the active site of HisF. This Pseudomonas syringae pv. syringae (strain B728a) protein is Imidazole glycerol phosphate synthase subunit HisH.